Reading from the N-terminus, the 378-residue chain is B3 domain-containing protein Os03g0622200 (378 aa).

Residues 29–124 constitute a DNA-binding region (TF-B3 1); sequence SKHFLKHMVG…SFDVLIFDPS (96 aa). The tract at residues 140-159 is disordered; sequence GRAENSAGAEQGGRNGRRTP. The segment at residues 256 to 370 is a DNA-binding region (TF-B3 2); that stretch reads FVQVIHSSHV…TMTVHVLRRV (115 aa).

It localises to the nucleus. This chain is B3 domain-containing protein Os03g0622200, found in Oryza sativa subsp. japonica (Rice).